A 247-amino-acid chain; its full sequence is MSLLPLTPSLRPFLEEYLPRPCSNRPFVTLTYAQSLDSRIAAKPGEQTKISHLETKTMTHYIRSKHDGIMVGIGTVLADDPKLNCRFEAEDGNISTPRPIILDPTGKWAYHKSQLRSVCDNNKGLAPFILIDETVTPRNEDVEVLDKQDGAFVRLPLLRNADKVGNWNIILKKLFQLGIKSIMVEGGASIINDLLVYSKIIDSLIITIGPVFLGKDGVEVSPSGHAGLIDVKWWQGIQDSVLCARLT.

Residues T75, D79, G165, and 187–191 contribute to the NADP(+) site; that span reads GASII.

It belongs to the HTP reductase family. Homodimer.

The enzyme catalyses 2,5-diamino-6-(1-D-ribitylamino)pyrimidin-4(3H)-one 5'-phosphate + NADP(+) = 2,5-diamino-6-(1-D-ribosylamino)pyrimidin-4(3H)-one 5'-phosphate + NADPH + H(+). It catalyses the reaction 2,5-diamino-6-(1-D-ribitylamino)pyrimidin-4(3H)-one 5'-phosphate + NAD(+) = 2,5-diamino-6-(1-D-ribosylamino)pyrimidin-4(3H)-one 5'-phosphate + NADH + H(+). Its pathway is cofactor biosynthesis; riboflavin biosynthesis. In terms of biological role, catalyzes an early step in riboflavin biosynthesis, the NADPH-dependent reduction of the ribose side chain of 2,5-diamino-6-ribosylamino-4(3H)-pyrimidinone 5'-phosphate, yielding 2,5-diamino-6-ribitylamino-4(3H)-pyrimidinone 5'-phosphate. The polypeptide is 2,5-diamino-6-ribosylamino-4(3H)-pyrimidinone 5'-phosphate reductase (RIB7) (Debaryomyces hansenii (strain ATCC 36239 / CBS 767 / BCRC 21394 / JCM 1990 / NBRC 0083 / IGC 2968) (Yeast)).